Here is a 202-residue protein sequence, read N- to C-terminus: Transcription factor MUTE (202 aa).

Residues 1–49 (MSHIAVERNRRRQMNEHLKSLRSLTPCFYIKRGDQASIIGGVIEFIKEL) enclose the bHLH domain.

In terms of assembly, homodimer. In terms of tissue distribution, leaf epidermis and flowers.

The protein resides in the nucleus. Transcription factor. Together with FMA and SPCH, regulates the stomata formation. Required for the differentiation of stomatal guard cells, by promoting successive asymmetric cell divisions and the formation of guard mother cells. Promotes the conversion of the leaf epidermis into stomata. The chain is Transcription factor MUTE (MUTE) from Arabidopsis thaliana (Mouse-ear cress).